The following is a 353-amino-acid chain: MNLLHTTVARIKPQDENIRRQAKDRLDRLTMPHWALGRLLDLALDLAGMTGSLQPPVDRRLIVTMAGDHGVAAEGVSAFPQEVTGQMVANIANGGAGISTLARVANARVQVVDMGAACDLSDLVDSGQILSRRIAPGTANMALGAAMTREQAVRSLEAGIEIANTFAGEADLFGTGEMGIANTTPSSAIVALLADATADQATGCGTGIDDNRRKHKVSVIERALQTNLPDPHDGLDVLAKVGGFEIGGLAGLILGAAALRKPIIIDGFISTAAALLAQSLAPASVDYMIAAHHSIEQGHQLALARLGKKPLLDLDFRLGEGTGAALAMNLVEGAKRLLTEMATFDEAAVSQGK.

The active-site Proton acceptor is the Glu320.

The protein belongs to the CobT family.

The catalysed reaction is 5,6-dimethylbenzimidazole + nicotinate beta-D-ribonucleotide = alpha-ribazole 5'-phosphate + nicotinate + H(+). It functions in the pathway nucleoside biosynthesis; alpha-ribazole biosynthesis; alpha-ribazole from 5,6-dimethylbenzimidazole: step 1/2. In terms of biological role, catalyzes the synthesis of alpha-ribazole-5'-phosphate from nicotinate mononucleotide (NAMN) and 5,6-dimethylbenzimidazole (DMB). This Syntrophotalea carbinolica (strain DSM 2380 / NBRC 103641 / GraBd1) (Pelobacter carbinolicus) protein is Nicotinate-nucleotide--dimethylbenzimidazole phosphoribosyltransferase.